The chain runs to 443 residues: Glucose-6-phosphate isomerase (443 aa).

Glutamate 285 (proton donor) is an active-site residue. Catalysis depends on residues histidine 306 and lysine 420.

This sequence belongs to the GPI family.

The protein resides in the cytoplasm. The enzyme catalyses alpha-D-glucose 6-phosphate = beta-D-fructose 6-phosphate. Its pathway is carbohydrate biosynthesis; gluconeogenesis. It functions in the pathway carbohydrate degradation; glycolysis; D-glyceraldehyde 3-phosphate and glycerone phosphate from D-glucose: step 2/4. In terms of biological role, catalyzes the reversible isomerization of glucose-6-phosphate to fructose-6-phosphate. The sequence is that of Glucose-6-phosphate isomerase from Staphylococcus aureus (strain USA300).